A 179-amino-acid polypeptide reads, in one-letter code: Large ribosomal subunit protein uL5 (179 aa).

Belongs to the universal ribosomal protein uL5 family. As to quaternary structure, part of the 50S ribosomal subunit; part of the 5S rRNA/L5/L18/L25 subcomplex. Contacts the 5S rRNA and the P site tRNA. Forms a bridge to the 30S subunit in the 70S ribosome.

Functionally, this is one of the proteins that bind and probably mediate the attachment of the 5S RNA into the large ribosomal subunit, where it forms part of the central protuberance. In the 70S ribosome it contacts protein S13 of the 30S subunit (bridge B1b), connecting the 2 subunits; this bridge is implicated in subunit movement. Contacts the P site tRNA; the 5S rRNA and some of its associated proteins might help stabilize positioning of ribosome-bound tRNAs. This Pseudomonas putida (strain ATCC 700007 / DSM 6899 / JCM 31910 / BCRC 17059 / LMG 24140 / F1) protein is Large ribosomal subunit protein uL5.